Here is a 58-residue protein sequence, read N- to C-terminus: Large ribosomal subunit protein bL32 (58 aa).

The protein belongs to the bacterial ribosomal protein bL32 family.

The polypeptide is Large ribosomal subunit protein bL32 (Anaplasma phagocytophilum (strain HZ)).